Reading from the N-terminus, the 328-residue chain is 5,10-methylenetetrahydromethanopterin reductase (328 aa).

The protein belongs to the mer family.

It is found in the cytoplasm. The enzyme catalyses 5-methyl-5,6,7,8-tetrahydromethanopterin + oxidized coenzyme F420-(gamma-L-Glu)(n) + H(+) = 5,10-methylenetetrahydromethanopterin + reduced coenzyme F420-(gamma-L-Glu)(n). It participates in one-carbon metabolism; methanogenesis from CO(2); methyl-coenzyme M from 5,10-methylene-5,6,7,8-tetrahydromethanopterin: step 1/2. In terms of biological role, catalyzes the reversible reduction of methylene-H(4)MPT to methyl-H(4)MPT. This is 5,10-methylenetetrahydromethanopterin reductase from Methanosarcina barkeri (strain Fusaro / DSM 804).